Consider the following 271-residue polypeptide: Ubiquitin thioesterase OTUB1 (271 aa).

At Ala2 the chain carries N-acetylalanine. Phosphoserine is present on Ser16. Residue Tyr26 is modified to Phosphotyrosine; by SRC. The 192-residue stretch at 80-271 (SYIRKTRPDG…RPGHYDILYK (192 aa)) folds into the OTU domain. Asp88 is an active-site residue. Cys91 functions as the Nucleophile in the catalytic mechanism. Ubiquitin-conjugating enzyme E2 binding regions lie at residues 130–138 (FTEFTIEDF) and 169–177 (DYLVVYLRL). The segment at 189-195 (FFEHFIE) is free ubiquitin binding. The segment at 206–213 (QEVEPMCK) is ubiquitin-conjugating enzyme E2 binding. Free ubiquitin binding stretches follow at residues 214 to 221 (ESDHIHII) and 245 to 251 (NPHIFPE). Residue His265 is part of the active site.

This sequence belongs to the peptidase C65 family. Interacts with FUS and RACK1. Interacts with UBE2D1/UBCH5A, UBE2W/UBC16 and UBE2N/UBC13. As to quaternary structure, interacts with RNF128. Forms a ternary complex with RNF128 and USP8. Interacts with the C-terminal UCH catalytic domain of USP8. In terms of assembly, interacts with RNF128. Does not associate with USP8. In terms of processing, phosphorylation at Tyr-26 by SRC and SRMS promotes deubiquitination of RPTOR via a non-catalytic process. In terms of tissue distribution, isoform 1 is ubiquitous. Isoform 2 is expressed only in lymphoid tissues such as tonsils, lymph nodes and spleen, as well as peripheral blood mononuclear cells.

It is found in the cytoplasm. The enzyme catalyses Thiol-dependent hydrolysis of ester, thioester, amide, peptide and isopeptide bonds formed by the C-terminal Gly of ubiquitin (a 76-residue protein attached to proteins as an intracellular targeting signal).. With respect to regulation, by free ubiquitin: binding of free ubiquitin triggers conformational changes in the OTU domain and formation of a ubiquitin-binding helix in the N-terminus, promoting binding of the conjugated donor ubiquitin in UBE2N/UBC13 to OTUB1. In terms of biological role, hydrolase that can specifically remove 'Lys-48'-linked conjugated ubiquitin from proteins and plays an important regulatory role at the level of protein turnover by preventing degradation. Regulator of T-cell anergy, a phenomenon that occurs when T-cells are rendered unresponsive to antigen rechallenge and no longer respond to their cognate antigen. Acts via its interaction with RNF128/GRAIL, a crucial inductor of CD4 T-cell anergy. Isoform 1 destabilizes RNF128, leading to prevent anergy. In contrast, isoform 2 stabilizes RNF128 and promotes anergy. Surprisingly, it regulates RNF128-mediated ubiquitination, but does not deubiquitinate polyubiquitinated RNF128. Deubiquitinates estrogen receptor alpha (ESR1). Mediates deubiquitination of 'Lys-48'-linked polyubiquitin chains, but not 'Lys-63'-linked polyubiquitin chains. Not able to cleave di-ubiquitin. Also capable of removing NEDD8 from NEDD8 conjugates, but with a much lower preference compared to 'Lys-48'-linked ubiquitin. Its function is as follows. Plays a key non-catalytic role in DNA repair regulation by inhibiting activity of RNF168, an E3 ubiquitin-protein ligase that promotes accumulation of 'Lys-63'-linked histone H2A and H2AX at DNA damage sites. Inhibits RNF168 independently of ubiquitin thioesterase activity by binding and inhibiting UBE2N/UBC13, the E2 partner of RNF168, thereby limiting spreading of 'Lys-63'-linked histone H2A and H2AX marks. Inhibition occurs by binding to free ubiquitin: free ubiquitin acts as an allosteric regulator that increases affinity for UBE2N/UBC13 and disrupts interaction with UBE2V1. The OTUB1-UBE2N/UBC13-free ubiquitin complex adopts a configuration that mimics a cleaved 'Lys48'-linked di-ubiquitin chain. Acts as a regulator of mTORC1 and mTORC2 complexes. When phosphorylated at Tyr-26, acts as an activator of the mTORC1 complex by mediating deubiquitination of RPTOR via a non-catalytic process: acts by binding and inhibiting the activity of the ubiquitin-conjugating enzyme E2 (UBE2D1/UBCH5A, UBE2W/UBC16 and UBE2N/UBC13), thereby preventing ubiquitination of RPTOR. Can also act as an inhibitor of the mTORC1 and mTORC2 complexes in response to amino acids by mediating non-catalytic deubiquitination of DEPTOR. This Homo sapiens (Human) protein is Ubiquitin thioesterase OTUB1 (OTUB1).